The chain runs to 183 residues: Large ribosomal subunit protein bL25 (183 aa).

Belongs to the bacterial ribosomal protein bL25 family. CTC subfamily. Part of the 50S ribosomal subunit; part of the 5S rRNA/L5/L18/L25 subcomplex. Contacts the 5S rRNA. Binds to the 5S rRNA independently of L5 and L18.

This is one of the proteins that binds to the 5S RNA in the ribosome where it forms part of the central protuberance. In Desulfotalea psychrophila (strain LSv54 / DSM 12343), this protein is Large ribosomal subunit protein bL25.